We begin with the raw amino-acid sequence, 471 residues long: MTGPTGAAVDGVARLGRVHLLGIGGVGMSGIARLLRGRGVEVSGTDAAPSPTLDRLRELGIRTRVGHDPAHLGDLGAGDTLVVSSAVRATNPELLAARERGVRVLHRSEALAALMAGRAGVAVAGTHGKTTTSSMLAVALTAAGLDPSYAIGGELTGGDDGGARDGSGPFVAEADESDGSFRAYAPVVDVVTNVEPDHLDHYGTAEAFAAAFEEFVDRLQPGGLLVACADDPGSAALAGHARGRGVRVRTYGASATADVRLRDLQPGAAASAVLVDGGVPRELRLAVPGEHNVLNAAAAYCAAVELGADPVAVLEGLARFGGARRRFELKGEAAGVRVVDDYAHHPTEVEALLRAARPVAGGGRVVVVFQPHLVSRTRAFAAEFGRALALADEVVVLDVYVAREDPDPEVTGALVADAVPLPAGRVRFLPDRSAAAGTLAATVRAGDLLLTVGAGDVTTVGPEVLNLLAER.

125–131 contacts ATP; it reads GTHGKTT.

It belongs to the MurCDEF family.

It localises to the cytoplasm. It catalyses the reaction UDP-N-acetyl-alpha-D-muramate + L-alanine + ATP = UDP-N-acetyl-alpha-D-muramoyl-L-alanine + ADP + phosphate + H(+). Its pathway is cell wall biogenesis; peptidoglycan biosynthesis. Its function is as follows. Cell wall formation. This chain is UDP-N-acetylmuramate--L-alanine ligase, found in Kineococcus radiotolerans (strain ATCC BAA-149 / DSM 14245 / SRS30216).